The chain runs to 453 residues: Mogroside IIIx synthase (453 aa).

His-21 acts as the Proton acceptor in catalysis. Asp-122 serves as the catalytic Charge relay. UDP-alpha-D-glucose is bound by residues Ser-273, Gln-336, Trp-354, Asn-355, Ser-356, Glu-359, Asp-375, and Gln-376.

It belongs to the UDP-glycosyltransferase family. In terms of tissue distribution, highly expressed in mature fruits.

It carries out the reaction mogroside IIE + UDP-alpha-D-glucose = mogroside IIIX + UDP + H(+). The enzyme catalyses mogroside III + UDP-alpha-D-glucose = mogroside IV + UDP + H(+). It catalyses the reaction mogroside III + UDP-alpha-D-glucose = siamenoside I + UDP + H(+). The catalysed reaction is mogroside IV + UDP-alpha-D-glucose = mogroside V + UDP + H(+). It functions in the pathway secondary metabolite biosynthesis; terpenoid biosynthesis. Functionally, UDP-glycosyltransferase involved in the biosynthesis of cucurbitacin and mogroside tetracyclic triterpene natural products (e.g. siamenoside I and mogrosides IV, V and VI). Cucurbitacins have cytotoxic properties and exhibit deterrent taste as a defense barrier against herbivores. Mogrosides are nonsugar highly oxygenated compounds used as high-intensity zero-calorie sweeteners; they also possess pharmacological properties such as regulating immunity, lowering blood sugar and lipid levels, protecting the liver, and acting as antioxidants and antitumor agents. Catalyzes the branched glucosylations of mogroside II-E, mogroside III and mogroside IV. This Siraitia grosvenorii (Monk's fruit) protein is Mogroside IIIx synthase.